An 83-amino-acid chain; its full sequence is Host transcription reprogramming factor 9 (83 aa).

The N-terminal stretch at M1 to A19 is a signal peptide. A C2H2-type zinc finger spans residues Y54–H77.

The protein localises to the secreted. Its subcellular location is the host nucleus. Probable secreted effector that translocates into the nuclei of host cells to reprogram the expression of targeted genes by binding on effector binding elements in rice. The polypeptide is Host transcription reprogramming factor 9 (Pyricularia oryzae (strain 70-15 / ATCC MYA-4617 / FGSC 8958) (Rice blast fungus)).